The primary structure comprises 60 residues: Large ribosomal subunit protein uL30 (60 aa).

Belongs to the universal ribosomal protein uL30 family. In terms of assembly, part of the 50S ribosomal subunit.

This Streptococcus pneumoniae serotype 2 (strain D39 / NCTC 7466) protein is Large ribosomal subunit protein uL30.